The following is a 1127-amino-acid chain: Disease resistance protein RPS6 (1127 aa).

Met1 is subject to N-acetylmethionine. In terms of domain architecture, TIR spans 12–176 (WSYHVFPSFS…EIANDILGKM (165 aa)). Glu87 is a catalytic residue. The NB-ARC domain maps to 191 to 452 (EDHITKMSSL…HIACIFNGEK (262 aa)). LRR repeat units follow at residues 197-221 (MSSL…GIGK), 540-563 (IDET…LFLK), 587-609 (PSRL…NFHP), 610-632 (ENLV…VHSL), 633-656 (AGLR…SMAT), 658-679 (LETL…IQYL), 680-704 (NKLN…NLKS), 766-790 (SPTL…IQNL), 791-813 (YQLE…GINL), 814-834 (DSLI…PDIS), and 835-857 (TNIS…IEKL).

Interacts with EDS1. In terms of tissue distribution, ubiquitous.

It catalyses the reaction NAD(+) + H2O = ADP-D-ribose + nicotinamide + H(+). Disease resistance (R) protein that specifically recognizes the hopA1 type III effector avirulence protein from Pseudomonas syringae. Resistance proteins guard the plant against pathogens that contain an appropriate avirulence protein via an indirect interaction with this avirulence protein. That triggers a defense system including the hypersensitive response, which restricts the pathogen growth. The polypeptide is Disease resistance protein RPS6 (RPS6) (Arabidopsis thaliana (Mouse-ear cress)).